A 215-amino-acid chain; its full sequence is Imidazole glycerol phosphate synthase subunit HisH (215 aa).

Residues 9-215 (EVVLVDYGLG…QNFVDYCLER (207 aa)) form the Glutamine amidotransferase type-1 domain. The active-site Nucleophile is the Cys-85. Residues His-193 and Glu-195 contribute to the active site.

As to quaternary structure, heterodimer of HisH and HisF.

It localises to the cytoplasm. The enzyme catalyses 5-[(5-phospho-1-deoxy-D-ribulos-1-ylimino)methylamino]-1-(5-phospho-beta-D-ribosyl)imidazole-4-carboxamide + L-glutamine = D-erythro-1-(imidazol-4-yl)glycerol 3-phosphate + 5-amino-1-(5-phospho-beta-D-ribosyl)imidazole-4-carboxamide + L-glutamate + H(+). The catalysed reaction is L-glutamine + H2O = L-glutamate + NH4(+). It participates in amino-acid biosynthesis; L-histidine biosynthesis; L-histidine from 5-phospho-alpha-D-ribose 1-diphosphate: step 5/9. In terms of biological role, IGPS catalyzes the conversion of PRFAR and glutamine to IGP, AICAR and glutamate. The HisH subunit catalyzes the hydrolysis of glutamine to glutamate and ammonia as part of the synthesis of IGP and AICAR. The resulting ammonia molecule is channeled to the active site of HisF. The polypeptide is Imidazole glycerol phosphate synthase subunit HisH (Natronomonas pharaonis (strain ATCC 35678 / DSM 2160 / CIP 103997 / JCM 8858 / NBRC 14720 / NCIMB 2260 / Gabara) (Halobacterium pharaonis)).